A 163-amino-acid polypeptide reads, in one-letter code: Retinoic acid receptor responder protein 2 (163 aa).

The N-terminal stretch at 1 to 20 is a signal peptide; the sequence is MKYLLISLALWLGMVGIHGT. Cystine bridges form between Cys-79–Cys-89, Cys-100–Cys-119, and Cys-103–Cys-135. Residues 158 to 163 constitute a propeptide that is removed on maturation; the sequence is RALKHK.

Secreted in an inactive precursor form, prochemerin, which is proteolytically processed by a variety of extracellular proteases to generate forms with differing levels of bioactivity. For example, the removal of six amino acids results in chemerin-157, which exhibits the highest activity, while removal of seven amino acids results in chemerin-156 which has slightly less activity. Some proteases are able to cleave at more than one site and chemerin forms may be sequentially processed by different enzymes to modulate activity levels. The coordinated expression and activity of chemerin-modifying enzymes is essential for regulating its bioactivation, inactivation and, consequently, biological function. Cathepsin G cleaves seven C-terminal amino acids from prochemerin (chemerin-156), elastase is able to cleave six (chemerin-157), eight (chemerin-155) or eleven (chemerin-152), plasmin cleaves five amino acids (chemerin-158), and tryptase cleaves five (chemerin-158) or eight (chemerin-155). Multiple cleavages might be required to fully activate chemerin, with an initial tryptase cleavage resulting in chemerin with low activity (chemerin-158), and a second cleavage by carboxypeptidase N or B producing highly active chemerin (chemerin-157).

It localises to the secreted. Adipocyte-secreted protein (adipokine) that regulates adipogenesis, metabolism and inflammation through activation of the chemokine-like receptor 1 (CMKLR1). Also acts as a ligand for CMKLR2. Can also bind to C-C chemokine receptor-like 2 (CCRL2), but with a lower affinity than it does to CMKLR1 or CMKLR2. Positively regulates adipocyte differentiation, modulates the expression of adipocyte genes involved in lipid and glucose metabolism and might play a role in angiogenesis, a process essential for the expansion of white adipose tissue. Also acts as a pro-inflammatory adipokine, causing an increase in secretion of pro-inflammatory and prodiabetic adipokines, which further impair adipose tissue metabolic function and have negative systemic effects including impaired insulin sensitivity, altered glucose and lipid metabolism, and a decrease in vascular function in other tissues. Can have both pro- and anti-inflammatory properties depending on the modality of enzymatic cleavage by different classes of proteases. Acts as a chemotactic factor for leukocyte populations expressing CMKLR1, particularly immature plasmacytoid dendritic cells, but also immature myeloid DCs, macrophages and natural killer cells. Exerts an anti-inflammatory role by preventing TNF/TNFA-induced VCAM1 expression and monocytes adhesion in vascular endothelial cells. The effect is mediated via inhibiting activation of NF-kappa-B and CRK/p38 through stimulation of AKT1/NOS3 signaling and nitric oxide production. Its dual role in inflammation and metabolism might provide a link Exhibits an antimicrobial function in the skin. In Cricetulus griseus (Chinese hamster), this protein is Retinoic acid receptor responder protein 2 (RARRES2).